The chain runs to 236 residues: Purine nucleoside phosphorylase DeoD-type 2 (236 aa).

His5 contacts a purine D-ribonucleoside. Residues Gly21, Arg25, Arg44, and 88-91 (RVGT) each bind phosphate. Residues 180 to 182 (EME) and 204 to 205 (SD) contribute to the a purine D-ribonucleoside site. Residue Asp205 is the Proton donor of the active site.

This sequence belongs to the PNP/UDP phosphorylase family. Homohexamer; trimer of homodimers.

The catalysed reaction is a purine D-ribonucleoside + phosphate = a purine nucleobase + alpha-D-ribose 1-phosphate. The enzyme catalyses a purine 2'-deoxy-D-ribonucleoside + phosphate = a purine nucleobase + 2-deoxy-alpha-D-ribose 1-phosphate. Catalyzes the reversible phosphorolytic breakdown of the N-glycosidic bond in the beta-(deoxy)ribonucleoside molecules, with the formation of the corresponding free purine bases and pentose-1-phosphate. The sequence is that of Purine nucleoside phosphorylase DeoD-type 2 from Shewanella oneidensis (strain ATCC 700550 / JCM 31522 / CIP 106686 / LMG 19005 / NCIMB 14063 / MR-1).